Consider the following 176-residue polypeptide: Shikimate kinase (176 aa).

Residue 14 to 19 coordinates ATP; that stretch reads GAGKST. Ser-18 contributes to the Mg(2+) binding site. Substrate contacts are provided by Asp-36, Arg-60, and Gly-83. Arg-121 lines the ATP pocket. Arg-140 is a substrate binding site.

This sequence belongs to the shikimate kinase family. As to quaternary structure, monomer. The cofactor is Mg(2+).

It is found in the cytoplasm. The catalysed reaction is shikimate + ATP = 3-phosphoshikimate + ADP + H(+). Its pathway is metabolic intermediate biosynthesis; chorismate biosynthesis; chorismate from D-erythrose 4-phosphate and phosphoenolpyruvate: step 5/7. Catalyzes the specific phosphorylation of the 3-hydroxyl group of shikimic acid using ATP as a cosubstrate. The protein is Shikimate kinase of Francisella tularensis subsp. tularensis (strain FSC 198).